Here is a 264-residue protein sequence, read N- to C-terminus: Complement C1q tumor necrosis factor-related protein 6 (264 aa).

An N-terminal signal peptide occupies residues 1-24 (MRVIMGIASLGFLWAVFLLPLVFG). Asn-77 carries an N-linked (GlcNAc...) asparagine glycan. The tract at residues 81–125 (LKGDKGDRGPTGTPGKPGKNGTRGDRGSQGVKGDKGQAGSPGSSC) is disordered. The Collagen-like domain occupies 83–124 (GDKGDRGPTGTPGKPGKNGTRGDRGSQGVKGDKGQAGSPGSS). Residues 90-100 (PTGTPGKPGKN) are compositionally biased toward low complexity. In terms of domain architecture, C1q spans 125-264 (CQTHYSAFSV…SGHLIKAEDN (140 aa)).

It is found in the secreted. The protein is Complement C1q tumor necrosis factor-related protein 6 (C1qtnf6) of Mus musculus (Mouse).